Here is a 357-residue protein sequence, read N- to C-terminus: MTPILFIDRDGTLIEEPSDFQIDAYEKLRFVPQVIPALLKLRDAGYQFVIVTNQDGLGSDSYPRASFDGPNELMLQIFESQGITFRDVLIDCSWPQDNAPTRKPGIGLMTAYLQDRSIDWARSGMVGDRITDLQFAENLNIRGFQLRTEQFGGEWDWPGIAHALADAPRIAVVQRDTKETKIRVELDLDRAGDARIDTGLPFFDHMLEQIGKHGGFALDIQAEGDLHIDEHHTIEDTGLALGQALREALGDKRGIGRYGFTLPMDETLASAALDFSGRPYFVFEGEFKRERVGDMPTELVPHFFRSLCDASGLNLNLQVRGDNDHHKVEACFKALARALRPALARQGTALPTTKGAL.

The interval 1-168 (MTPILFIDRD…GIAHALADAP (168 aa)) is histidinol-phosphatase. The Nucleophile role is filled by Asp-8. Positions 8, 10, and 128 each coordinate Mg(2+). Asp-10 acts as the Proton donor in catalysis. The interval 169-357 (RIAVVQRDTK…TALPTTKGAL (189 aa)) is imidazoleglycerol-phosphate dehydratase.

This sequence in the N-terminal section; belongs to the histidinol-phosphatase family. In the C-terminal section; belongs to the imidazoleglycerol-phosphate dehydratase family. Mg(2+) serves as cofactor.

It localises to the cytoplasm. The catalysed reaction is D-erythro-1-(imidazol-4-yl)glycerol 3-phosphate = 3-(imidazol-4-yl)-2-oxopropyl phosphate + H2O. The enzyme catalyses L-histidinol phosphate + H2O = L-histidinol + phosphate. It functions in the pathway amino-acid biosynthesis; L-histidine biosynthesis; L-histidine from 5-phospho-alpha-D-ribose 1-diphosphate: step 6/9. It participates in amino-acid biosynthesis; L-histidine biosynthesis; L-histidine from 5-phospho-alpha-D-ribose 1-diphosphate: step 8/9. In Stenotrophomonas maltophilia (strain R551-3), this protein is Histidine biosynthesis bifunctional protein HisB.